The primary structure comprises 469 residues: Mitochondrial adenyl nucleotide antiporter SLC25A25 (469 aa).

A regulatory N-terminal domain region spans residues M1 to D165. Residues M1–H189 lie on the Mitochondrial intermembrane side of the membrane. 3 consecutive EF-hand domains span residues T47–E80, D78–K113, and I114–E149. D60, D62, D64, Q66, and E71 together coordinate Ca(2+). The segment at I151–H160 is linker region. A C-terminal transmembrane transporter domain region spans residues V166–R469. 3 Solcar repeats span residues G184–L270, L278–T363, and P375–T463. Residues L190 to L207 traverse the membrane as a helical segment. Residues D208 to R244 are Mitochondrial matrix-facing. Residues G245–Y264 form a helical membrane-spanning segment. Topologically, residues E265 to G287 are mitochondrial intermembrane. Residues S288–M301 form a helical membrane-spanning segment. Residues E302–K337 are Mitochondrial matrix-facing. A helical transmembrane segment spans residues G338–Y357. Residues E358 to L380 lie on the Mitochondrial intermembrane side of the membrane. A helical transmembrane segment spans residues L381–L398. The Mitochondrial matrix segment spans residues A399–R437. The helical transmembrane segment at G438–Y457 threads the bilayer. The Mitochondrial intermembrane segment spans residues E458–R469.

This sequence belongs to the mitochondrial carrier (TC 2.A.29) family.

Its subcellular location is the mitochondrion inner membrane. It catalyses the reaction Mg(2+)(out) + phosphate(in) + ATP(out) = Mg(2+)(in) + phosphate(out) + ATP(in). Its activity is regulated as follows. Activated by an increase in cytosolic calcium levels that induce a conformational change of the N-terminal regulatory domain, uncapping the channel and allowing transport. Its function is as follows. Electroneutral antiporter that most probably mediates the transport of adenyl nucleotides through the inner mitochondrial membrane. Originally identified as an ATP-magnesium/inorganic phosphate antiporter, it could have a broader specificity for adenyl nucleotides. By regulating the mitochondrial matrix adenyl nucleotide pool could adapt to changing cellular energetic demands and indirectly regulate adenyl nucleotide-dependent metabolic pathways. This is Mitochondrial adenyl nucleotide antiporter SLC25A25 from Mus musculus (Mouse).